Here is a 55-residue protein sequence, read N- to C-terminus: uncharacterized protein (55 aa).

This is an uncharacterized protein from Mycoplasma mycoides.